A 96-amino-acid polypeptide reads, in one-letter code: Mitochondrial import inner membrane translocase subunit Tim13-A (96 aa).

Residues 47-70 (CFRKCIGKPGGSLDNSEQKCIAMC) carry the Twin CX3C motif motif. 2 disulfide bridges follow: cysteine 47–cysteine 70 and cysteine 51–cysteine 66.

The protein belongs to the small Tim family. As to quaternary structure, heterohexamer; composed of 3 copies of TIMM8 (TIMM8A or TIMM8B) and 3 copies of TIMM13, named soluble 70 kDa complex. Associates with the TIM22 complex, whose core is composed of TIMM22.

The protein resides in the mitochondrion inner membrane. Functionally, mitochondrial intermembrane chaperone that participates in the import and insertion of some multi-pass transmembrane proteins into the mitochondrial inner membrane. Also required for the transfer of beta-barrel precursors from the TOM complex to the sorting and assembly machinery (SAM complex) of the outer membrane. Acts as a chaperone-like protein that protects the hydrophobic precursors from aggregation and guide them through the mitochondrial intermembrane space. The TIMM8-TIMM13 complex mediates the import of some proteins while the predominant TIMM9-TIMM10 70 kDa complex mediates the import of much more proteins. The sequence is that of Mitochondrial import inner membrane translocase subunit Tim13-A (timm13-a) from Xenopus laevis (African clawed frog).